The primary structure comprises 886 residues: DNA mismatch repair protein MutS (886 aa).

Residue 627–634 (GPNMGGKS) participates in ATP binding. The disordered stretch occupies residues 834–857 (VECADAPAPSDATHPALDRLRDID).

Belongs to the DNA mismatch repair MutS family.

In terms of biological role, this protein is involved in the repair of mismatches in DNA. It is possible that it carries out the mismatch recognition step. This protein has a weak ATPase activity. This chain is DNA mismatch repair protein MutS, found in Burkholderia vietnamiensis (strain G4 / LMG 22486) (Burkholderia cepacia (strain R1808)).